The primary structure comprises 185 residues: uncharacterized protein (185 aa).

The N-terminal 56 residues, 1–56 (MSSFTIPSPSSFSLSNSYNQTSPHSFTLRNSRSNFEFHRLRLDVESRRRSTSLRSN), are a transit peptide targeting the chloroplast. Residues 48 to 67 (RRSTSLRSNCSTKGTDSGEN) are disordered. Positions 52-64 (SLRSNCSTKGTDS) are enriched in polar residues. Residues 105–138 (QAEQQKQVQEIQEEVLERAKKAKERAARETMEEQ) are a coiled coil.

The protein localises to the plastid. The protein resides in the chloroplast. It is found in the plastoglobule. This is an uncharacterized protein from Arabidopsis thaliana (Mouse-ear cress).